The sequence spans 315 residues: Putative protein phosphatase 2C 24 (315 aa).

The PPM-type phosphatase domain maps to 71-314; sequence ALRMEAASCF…DDITVVVAYI (244 aa). Mn(2+) contacts are provided by Asp102, Gly103, Asp238, and Asp305.

The protein belongs to the PP2C family. Mg(2+) is required as a cofactor. It depends on Mn(2+) as a cofactor.

The catalysed reaction is O-phospho-L-seryl-[protein] + H2O = L-seryl-[protein] + phosphate. The enzyme catalyses O-phospho-L-threonyl-[protein] + H2O = L-threonyl-[protein] + phosphate. The polypeptide is Putative protein phosphatase 2C 24 (Oryza sativa subsp. japonica (Rice)).